The chain runs to 453 residues: MGKEKTHINIVVIGHVDAGKSTTTGHLIYKCGGIDKRVIEKYEKEASEMGKQSFKYAWVMDKLKAERERGITIDIALWKFETSKYYFTIIDAPGHRDFIKNMITGTSQADCAVLVIASPTGEFEAGIAKNGQTREHALLAYTLGVKQMIVAINKMDEKSTNYSQARYDEIVKEVSSFIKKIGYNPEKVAFVPISGWNGDNMLERSDKMEWYKGPTLLEALDAIVEPKRPHDKPLRIPLQDVYKIGGIGTVPVGRVETGIIKPGMVVTFAPAGLSTEVKSVEMHHEQLPEARPGDNVGFNVKNVSVKEIKRGMVAGDSKNDPPQETEKFVAQVIVLNHPGQIHAGYSPVLDCHTAHIACKFTEIVDKVDRRTGAVVAKEGTAAVVLKNGDAAMVELTPSRPMCVESFTEYPPLGRFAVRDMRQTVAVGVIKSTVKKAPGKAGDKKGAAAPSKKK.

The tr-type G domain occupies 5-230; it reads KTHINIVVIG…DAIVEPKRPH (226 aa). A G1 region spans residues 14–21; the sequence is GHVDAGKS. 14–21 provides a ligand contact to GTP; sequence GHVDAGKS. The tract at residues 70–74 is G2; the sequence is GITID. Residues 91-94 are G3; it reads DAPG. GTP contacts are provided by residues 91-95 and 153-156; these read DAPGH and NKMD. Positions 153–156 are G4; sequence NKMD. The interval 194–196 is G5; the sequence is SGW.

Belongs to the TRAFAC class translation factor GTPase superfamily. Classic translation factor GTPase family. EF-Tu/EF-1A subfamily. In terms of assembly, binds to actin.

The protein resides in the cytoplasm. In terms of biological role, this protein promotes the GTP-dependent binding of aminoacyl-tRNA to the A-site of ribosomes during protein biosynthesis. It is also an abundant actin filament bundling protein. This is Elongation factor 1-alpha (eef1a2) from Dictyostelium discoideum (Social amoeba).